Reading from the N-terminus, the 729-residue chain is E3 ubiquitin-protein ligase Trim36 (729 aa).

The RING-type; degenerate zinc finger occupies 33-84; sequence CPACKELFTHPLILPCQHSVCHKCVKELLLSLDDSFNDVASDSSNQSSPRLR. 2 B box-type zinc fingers span residues 154-192 and 207-249; these read AIMCDLCKPPPQESTKSCMDCSASYCNECFKIYHPWGTV and PKVL…VTTM. Positions 212, 215, 235, and 241 each coordinate Zn(2+). The stretch at 271–302 forms a coiled coil; it reads ESQVKSQISELNLLMKETECNGERAKEEALAH. Residues 356–413 form the COS domain; it reads LKETDQSCFVQTAKQLHLRIQKATESLKSFRPAAQASFEDYVVNISKQTEVLGELSFF. The Fibronectin type-III domain occupies 416–511; the sequence is GIDIPEINEE…RELILHTPPA (96 aa). Residues 509-723 enclose the B30.2/SPRY domain; that stretch reads PPAPVFSFLF…LEEAITAKYL (215 aa). A disordered region spans residues 606–626; it reads RDAASPRYEQDSGHDSGSEDA. Basic and acidic residues predominate over residues 613 to 622; sequence YEQDSGHDSG.

Belongs to the TRIM/RBCC family. Interacts with CENPH. In terms of tissue distribution, expressed in testis. Strongly expressed in the neural tube region in 14.5 dpc embryos.

It is found in the cytoplasm. The protein localises to the cytoplasmic vesicle. It localises to the secretory vesicle. Its subcellular location is the acrosome. The protein resides in the cytoskeleton. It catalyses the reaction S-ubiquitinyl-[E2 ubiquitin-conjugating enzyme]-L-cysteine + [acceptor protein]-L-lysine = [E2 ubiquitin-conjugating enzyme]-L-cysteine + N(6)-ubiquitinyl-[acceptor protein]-L-lysine.. Functionally, E3 ubiquitin-protein ligase which mediates ubiquitination and subsequent proteasomal degradation of target proteins. Involved in chromosome segregation and cell cycle regulation. May play a role in the acrosome reaction and fertilization. This Mus musculus (Mouse) protein is E3 ubiquitin-protein ligase Trim36 (Trim36).